Reading from the N-terminus, the 125-residue chain is UPF0102 protein mlr4633 (125 aa).

Belongs to the UPF0102 family.

The sequence is that of UPF0102 protein mlr4633 from Mesorhizobium japonicum (strain LMG 29417 / CECT 9101 / MAFF 303099) (Mesorhizobium loti (strain MAFF 303099)).